Reading from the N-terminus, the 297-residue chain is MVEVRVPATSANIGPGFDCLGVAVNMYNKFFVEEIEEGLIFEGCADKFKNENNLIYVAMKKCFDKIGYKPTGLRIKIESDIPVSRGLGSSAACVVGGIVSANELAGGALNKKELLDLAVEVEGHPDNVNPAFCGGMTASISDNREVIYSKVKVSEGIKFCALIPDFTLSTEKARAVLPKSIDYKDGIFNVGRTALMISALNNGDFHLIKYACKDKLHQDYRAKLIENFYSIKKQCEKLNSLGVFLSGAGPTIMVMLREEDKDFSKNIKSFLETLKNKWEVRELKIDKLGTVVNNCKV.

82–92 (PVSRGLGSSAA) serves as a coordination point for ATP.

It belongs to the GHMP kinase family. Homoserine kinase subfamily.

The protein localises to the cytoplasm. The enzyme catalyses L-homoserine + ATP = O-phospho-L-homoserine + ADP + H(+). The protein operates within amino-acid biosynthesis; L-threonine biosynthesis; L-threonine from L-aspartate: step 4/5. In terms of biological role, catalyzes the ATP-dependent phosphorylation of L-homoserine to L-homoserine phosphate. This Clostridium botulinum (strain ATCC 19397 / Type A) protein is Homoserine kinase.